A 137-amino-acid chain; its full sequence is Large ribosomal subunit protein uL16 (137 aa).

This sequence belongs to the universal ribosomal protein uL16 family. Part of the 50S ribosomal subunit.

Functionally, binds 23S rRNA and is also seen to make contacts with the A and possibly P site tRNAs. The polypeptide is Large ribosomal subunit protein uL16 (Cereibacter sphaeroides (strain ATCC 17029 / ATH 2.4.9) (Rhodobacter sphaeroides)).